The sequence spans 300 residues: MSSRAGIAEGYEQIEVDVVAVWKEGYVYENRGSTSVEQKIKITKGMRNLNSETKTLTASHSIGSTISTGDLFEIATVDVSYSYSHEESQVSMTETEVYESKEIEHTITIPPTSKFTRWQLNADVGGADIEYMYLIDEVTPIGGTLSIPQVIKSRAKILVGREIYLGETEIRIKHADRKEYMTVVSRKSWPAATLGHSKLYKFVLYEDMYGFRIKTLNTMYSGYEYAYSSDQGGIYFDQGSDNPKQRWAINKSLPLRHGDVVTFMNKYFTRSGLCYYDGPATDVYCLDKREDKWILEVVKP.

An N-terminal cap domain region spans residues 12-35; sequence EQIEVDVVAVWKEGYVYENRGSTS. A beta-hairpin domain region spans residues 36–109; the sequence is VEQKIKITKG…SKEIEHTITI (74 aa). The segment at 110 to 158 is N-terminal cap domain; it reads PPTSKFTRWQLNADVGGADIEYMYLIDEVTPIGGTLSIPQVIKSRAKIL. The interval 159-299 is C-terminal receptor-binding domain; the sequence is VGREIYLGET…EDKWILEVVK (141 aa). The an N-(acyl)-sphingosylphosphocholine site is built by K187, S229, Y235, and Y284. C274 and C285 form a disulfide bridge.

The protein belongs to the lysenin family. As to quaternary structure, binds to sphingomyelin as a monomer by using its C-terminal domain. Forms a nonamer when sphingomyelin/LRP-2 ratio is lower than ca 500. Oligomerization, but not binding, is influenced by the fluidity of sphingomyelin. In terms of tissue distribution, expressed by coelomocytes.

Its subcellular location is the secreted. It localises to the target cell membrane. In terms of biological role, pore-forming toxin that specifically binds sphingomyelin in the plasma membrane of various cells. Has hemolytic activity. It also has antibacterial activities against B.megaterium. The protein is Lysenin-related protein 2 of Eisenia fetida (Red wiggler worm).